A 339-amino-acid polypeptide reads, in one-letter code: Glucokinase (339 aa).

ATP is bound at residue 16–21 (GDIGGT).

The protein belongs to the bacterial glucokinase family.

It localises to the cytoplasm. The catalysed reaction is D-glucose + ATP = D-glucose 6-phosphate + ADP + H(+). This is Glucokinase from Rhizobium meliloti (strain 1021) (Ensifer meliloti).